The chain runs to 281 residues: DegV domain-containing protein spr0652 (281 aa).

The region spanning 3–280 (WKIIADSGCD…EGGLLMGYEI (278 aa)) is the DegV domain. Residues Ser63 and Ser91 each contribute to the hexadecanoate site.

May bind long-chain fatty acids, such as palmitate, and may play a role in lipid transport or fatty acid metabolism. The protein is DegV domain-containing protein spr0652 of Streptococcus pneumoniae (strain ATCC BAA-255 / R6).